The following is a 203-amino-acid chain: Small ribosomal subunit protein uS4 (203 aa).

One can recognise an S4 RNA-binding domain in the interval 93–156 (QRLDNVVYRL…MKVPAILEAV (64 aa)).

The protein belongs to the universal ribosomal protein uS4 family. In terms of assembly, part of the 30S ribosomal subunit. Contacts protein S5. The interaction surface between S4 and S5 is involved in control of translational fidelity.

One of the primary rRNA binding proteins, it binds directly to 16S rRNA where it nucleates assembly of the body of the 30S subunit. In terms of biological role, with S5 and S12 plays an important role in translational accuracy. This Lactococcus lactis subsp. cremoris (strain MG1363) protein is Small ribosomal subunit protein uS4.